The sequence spans 609 residues: Glutamine--fructose-6-phosphate aminotransferase [isomerizing] (609 aa).

C2 acts as the Nucleophile; for GATase activity in catalysis. Residues 2–218 form the Glutamine amidotransferase type-2 domain; it reads CGIVGAIAQR…EGDIAEITRR (217 aa). SIS domains lie at 286 to 426 and 458 to 599; these read ADEL…LKGL and LAED…VDQP. K604 serves as the catalytic For Fru-6P isomerization activity.

As to quaternary structure, homodimer.

It localises to the cytoplasm. The enzyme catalyses D-fructose 6-phosphate + L-glutamine = D-glucosamine 6-phosphate + L-glutamate. Its function is as follows. Catalyzes the first step in hexosamine metabolism, converting fructose-6P into glucosamine-6P using glutamine as a nitrogen source. The chain is Glutamine--fructose-6-phosphate aminotransferase [isomerizing] from Escherichia coli O6:H1 (strain CFT073 / ATCC 700928 / UPEC).